The following is a 258-amino-acid chain: Ubiquinone/menaquinone biosynthesis C-methyltransferase UbiE (258 aa).

Residues T81, D102, and 130–131 contribute to the S-adenosyl-L-methionine site; that span reads NA.

Belongs to the class I-like SAM-binding methyltransferase superfamily. MenG/UbiE family.

The enzyme catalyses a 2-demethylmenaquinol + S-adenosyl-L-methionine = a menaquinol + S-adenosyl-L-homocysteine + H(+). It catalyses the reaction a 2-methoxy-6-(all-trans-polyprenyl)benzene-1,4-diol + S-adenosyl-L-methionine = a 5-methoxy-2-methyl-3-(all-trans-polyprenyl)benzene-1,4-diol + S-adenosyl-L-homocysteine + H(+). It functions in the pathway quinol/quinone metabolism; menaquinone biosynthesis; menaquinol from 1,4-dihydroxy-2-naphthoate: step 2/2. Its pathway is cofactor biosynthesis; ubiquinone biosynthesis. In terms of biological role, methyltransferase required for the conversion of demethylmenaquinol (DMKH2) to menaquinol (MKH2) and the conversion of 2-polyprenyl-6-methoxy-1,4-benzoquinol (DDMQH2) to 2-polyprenyl-3-methyl-6-methoxy-1,4-benzoquinol (DMQH2). The polypeptide is Ubiquinone/menaquinone biosynthesis C-methyltransferase UbiE (Allorhizobium ampelinum (strain ATCC BAA-846 / DSM 112012 / S4) (Agrobacterium vitis (strain S4))).